Here is a 490-residue protein sequence, read N- to C-terminus: Betaine aldehyde dehydrogenase (490 aa).

The K(+) site is built by threonine 26, isoleucine 27, and aspartate 93. An NAD(+)-binding site is contributed by 150–152 (GAW). Catalysis depends on lysine 162, which acts as the Charge relay system. 176–179 (KPSE) lines the NAD(+) pocket. K(+) is bound at residue valine 180. 230–233 (GVAS) serves as a coordination point for NAD(+). Leucine 246 provides a ligand contact to K(+). Glutamate 252 (proton acceptor) is an active-site residue. NAD(+)-binding residues include glycine 254, cysteine 286, and glutamate 387. Catalysis depends on cysteine 286, which acts as the Nucleophile. At cysteine 286 the chain carries Cysteine sulfenic acid (-SOH). The K(+) site is built by lysine 457 and glycine 460. Glutamate 464 functions as the Charge relay system in the catalytic mechanism.

The protein belongs to the aldehyde dehydrogenase family. As to quaternary structure, dimer of dimers. K(+) serves as cofactor.

It carries out the reaction betaine aldehyde + NAD(+) + H2O = glycine betaine + NADH + 2 H(+). It functions in the pathway amine and polyamine biosynthesis; betaine biosynthesis via choline pathway; betaine from betaine aldehyde: step 1/1. In terms of biological role, involved in the biosynthesis of the osmoprotectant glycine betaine. Catalyzes the irreversible oxidation of betaine aldehyde to the corresponding acid. This Escherichia coli O9:H4 (strain HS) protein is Betaine aldehyde dehydrogenase.